The chain runs to 275 residues: MPLIKFKPTSPGRRSAARVVTPNIHKGSPHAALLESQSKTGGRNHHGRITVRHIGGGCKQRYRVIDFKRDKEAIPARVERIEYDPNRTAHIALLCYIDGERCYIIAPKGLKEGDKIISGPNVPIKLGNSLPLRNIPVGTTVHAVELKPRKGAQMARSAGSSVQLVAREGVYATLRLRSGEMRRVLAECRATIGEVGNEEHNLRKLGKAGAKRWLGVRPTVRGAAMNPVDHPHGGGEAKSGQGNPHPVTPWGVPTKGYKTRKNKRTQQFIIRGRRG.

Positions Pro227–Lys261 are disordered.

Belongs to the universal ribosomal protein uL2 family. As to quaternary structure, part of the 50S ribosomal subunit. Forms a bridge to the 30S subunit in the 70S ribosome.

Functionally, one of the primary rRNA binding proteins. Required for association of the 30S and 50S subunits to form the 70S ribosome, for tRNA binding and peptide bond formation. It has been suggested to have peptidyltransferase activity; this is somewhat controversial. Makes several contacts with the 16S rRNA in the 70S ribosome. In Xylella fastidiosa (strain M23), this protein is Large ribosomal subunit protein uL2.